The sequence spans 406 residues: MYAPMMPSPTAVAAPVAALSILPSLAGLDREKLGLALAAIGVPERERKMRVNQLWHWIYLRGATDFAEMTNVSKTLRTQLAEHYSLARPEIVVEQVSQDGTRKWLLRLPAETPGERPHEVEAVYIPERDRGTLCVSSQVGCTLNCAFCHTGTQRLVRNLTAAEIVAQVLVARDRLGDYPGRERAVGPGLPTEGDRLVTNIVFMGMGEPLYAYDSVAEAIEILADGDGLGLGKRRITVSTSGVVPEIEKLGREVGPMLAISLHAVRDDLRDVLVPINKKYPIAELMEACRTYPAASNAKRITFEYVMLKGVNDSPADARALVKLLEGVPAKINLIPFNPWPGTKYECSDWETIEKFSDIVFRAGYASPVRTPRGRDILAACGQLKSETEKLSARERLALRAMAAAAE.

Residue glutamate 121 is the Proton acceptor of the active site. Positions 127 to 377 (ERDRGTLCVS…VRTPRGRDIL (251 aa)) constitute a Radical SAM core domain. An intrachain disulfide couples cysteine 134 to cysteine 380. [4Fe-4S] cluster-binding residues include cysteine 141, cysteine 145, and cysteine 148. S-adenosyl-L-methionine-binding positions include 206–207 (GE), serine 238, 260–262 (SLH), and asparagine 337. The S-methylcysteine intermediate role is filled by cysteine 380.

Belongs to the radical SAM superfamily. RlmN family. [4Fe-4S] cluster is required as a cofactor.

The protein localises to the cytoplasm. It carries out the reaction adenosine(2503) in 23S rRNA + 2 reduced [2Fe-2S]-[ferredoxin] + 2 S-adenosyl-L-methionine = 2-methyladenosine(2503) in 23S rRNA + 5'-deoxyadenosine + L-methionine + 2 oxidized [2Fe-2S]-[ferredoxin] + S-adenosyl-L-homocysteine. The catalysed reaction is adenosine(37) in tRNA + 2 reduced [2Fe-2S]-[ferredoxin] + 2 S-adenosyl-L-methionine = 2-methyladenosine(37) in tRNA + 5'-deoxyadenosine + L-methionine + 2 oxidized [2Fe-2S]-[ferredoxin] + S-adenosyl-L-homocysteine. Its function is as follows. Specifically methylates position 2 of adenine 2503 in 23S rRNA and position 2 of adenine 37 in tRNAs. m2A2503 modification seems to play a crucial role in the proofreading step occurring at the peptidyl transferase center and thus would serve to optimize ribosomal fidelity. The protein is Dual-specificity RNA methyltransferase RlmN of Azorhizobium caulinodans (strain ATCC 43989 / DSM 5975 / JCM 20966 / LMG 6465 / NBRC 14845 / NCIMB 13405 / ORS 571).